Here is a 456-residue protein sequence, read N- to C-terminus: RUN domain-containing protein 3B (456 aa).

Residues 1-26 are disordered; that stretch reads MASRSLGGLSGIRGGGGGGGKKSLSS. Residues 8 to 21 show a composition bias toward gly residues; the sequence is GLSGIRGGGGGGGK. Arg-13 carries the omega-N-methylarginine modification. Positions 57–189 constitute an RUN domain; sequence DDSSPEFNNF…IDFSFCLKGE (133 aa). Residues Ser-215 and Ser-216 each carry the phosphoserine modification. Positions 300–325 form a coiled coil; that stretch reads AHKLEKEQLEYIIVELQDQLTVLKNN. The disordered stretch occupies residues 382–405; it reads SLSQTSLDPGQSQEGDGKQDTLNI.

This sequence belongs to the RUNDC3 family. Interacts with RAP2A.

The sequence is that of RUN domain-containing protein 3B (RUNDC3B) from Macaca fascicularis (Crab-eating macaque).